The sequence spans 345 residues: MSENLSEKKKALEVALSNIEKRFGKGAVMPLKSVEKVQVETIPTGSLALDIATGVGGIPKGRITEIFGVESSGKTTLALHVIAEAQKRGGVAVFIDAEHALDPKYAKKLGVDVENLYISQPDYGEQALEIAESLINSGAVDVIVVDSVAALVPKDELEGEMGEAQVGKQARLMSQALRKLKGAVHKSNTALIFINQIREKIGVMFGNPETTPGGRALKFFSDMRLEVRRLGDVKEGGEKKGYRVKVRVVKNKLAPPFQEAEFDIIYGEGICKLCDLIEVATNLGIFTKSGSWYSYGDKRLGQGKEQVKKYLQEHPELIDEIDQKVREAAGLAGSNIEESTGEEGK.

68–75 (GVESSGKT) serves as a coordination point for ATP.

Belongs to the RecA family.

The protein resides in the cytoplasm. Its function is as follows. Can catalyze the hydrolysis of ATP in the presence of single-stranded DNA, the ATP-dependent uptake of single-stranded DNA by duplex DNA, and the ATP-dependent hybridization of homologous single-stranded DNAs. It interacts with LexA causing its activation and leading to its autocatalytic cleavage. In Aquifex aeolicus (strain VF5), this protein is Protein RecA.